A 185-amino-acid chain; its full sequence is Large ribosomal subunit protein uL22 (185 aa).

The disordered stretch occupies residues 160-185 (VSHDDSQKKKVSKKKLARQKEKMMRE).

The protein belongs to the universal ribosomal protein uL22 family.

This chain is Large ribosomal subunit protein uL22 (RpL17), found in Maconellicoccus hirsutus (Pink hibiscus mealybug).